We begin with the raw amino-acid sequence, 147 residues long: Small ribosomal subunit protein uS12 (147 aa).

The protein belongs to the universal ribosomal protein uS12 family. As to quaternary structure, part of the 30S ribosomal subunit.

Functionally, with S4 and S5 plays an important role in translational accuracy. Located at the interface of the 30S and 50S subunits. The chain is Small ribosomal subunit protein uS12 from Ignicoccus hospitalis (strain KIN4/I / DSM 18386 / JCM 14125).